A 494-amino-acid chain; its full sequence is MGRKKIQITRIMDERNRQVTFTKRKFGLMKKAYELSVLCDCEIALIIFNSSNKLFQYASTDMDKVLLKYTEYNEPHESRTNSDIVETLRKKGLNGCESPDADDYFEHSPLSEDRFSKLNEDSDFIFKRGPPGLPPQNFSMSVTVPVTSPNALSYTNPGSSLVSPSLAASSTLTDSSMLSPPQTTLHRNVSPGAPQRPPSTGNAGGMLSTTDLIVPNGAGSSPVGNGFVNSRASPNLIGATGANSLGKVMPTKSPPPPGGGNLGMNSRKPDLRVVIPPSSKGMMPPLNTQRISSSQATQPLATPVVSVTTPSLPPQGLVYSAMPTAYNTDYSLTSADLSALQGFNSPGMLSLGQVSAWQQHHLGQAALSSLVAGGQLSQGSNLSINTNQNINIKSEPISPPRDRMTPSGFQQQQQQQQQPPPPPPQPQPPQPQPRQEMGRSPVDSLSSSSSSYDGSDREDPRGDFHSPIVLGRPPNTEDRESPSVKRMRMDAWVT.

The region spanning 3–57 (RKKIQITRIMDERNRQVTFTKRKFGLMKKAYELSVLCDCEIALIIFNSSNKLFQY) is the MADS-box domain. Residues 58-86 (ASTDMDKVLLKYTEYNEPHESRTNSDIVE) constitute a DNA-binding region (mef2-type). Position 59 is a phosphoserine; by CK2 (S59). 2 positions are modified to phosphoserine: S98 and S108. The span at 171-181 (TLTDSSMLSPP) shows a compositional bias: low complexity. The interval 171-218 (TLTDSSMLSPPQTTLHRNVSPGAPQRPPSTGNAGGMLSTTDLIVPNGA) is disordered. Phosphoserine is present on S233. Positions 238–268 (GATGANSLGKVMPTKSPPPPGGGNLGMNSRK) are disordered. Position 247 is an N6-acetyllysine (K247). Residue S253 is modified to Phosphoserine. The interval 264–281 (MNSRKPDLRVVIPPSSKG) is required for interaction with MAPKs. Residues T302 and T309 each carry the phosphothreonine; by MAPK7 and MAPK14 modification. S345 is modified (phosphoserine; by MAPK7). The span at 380 to 392 (SNLSINTNQNINI) shows a compositional bias: polar residues. Positions 380-494 (SNLSINTNQN…KRMRMDAWVT (115 aa)) are disordered. N6-acetyllysine; alternate is present on K393. A Glycyl lysine isopeptide (Lys-Gly) (interchain with G-Cter in SUMO); alternate cross-link involves residue K393. S398 bears the Phosphoserine; by CDK5 mark. The residue at position 405 (T405) is a Phosphothreonine. Over residues 418-432 (QPPPPPPQPQPPQPQ) the composition is skewed to pro residues. S440 bears the Phosphoserine mark. Residues 440 to 453 (SPVDSLSSSSSSYD) are compositionally biased toward low complexity. Composition is skewed to basic and acidic residues over residues 454–464 (GSDREDPRGDF) and 475–494 (NTED…AWVT).

Binds DNA as a homo- or heterodimer. Dimerizes with MEF2D. Interacts with HDAC7. Interacts with PIAS1; the interaction enhances sumoylation. Interacts with HDAC4, HDAC9 and SLC2A4RG. Interacts (via the N-terminal) with MAPK7; the interaction results in the phosphorylation and transcriptional activity of MEF2A. In terms of processing, constitutive phosphorylation on Ser-398 promotes Lys-393 sumoylation thus preventing acetylation at this site. Dephosphorylation on Ser-398 by PPP3CA upon neuron depolarization promotes a switch from sumoylation to acetylation on residue Lys-393 leading to inhibition of dendrite claw differentiation. Phosphorylation on Thr-302 and Thr-309 are the main sites involved in p38 MAPK signaling and activate transcription. Phosphorylated on these sites by MAPK14/p38alpha and MAPK11/p38beta, but not by MAPK13/p38delta nor by MAPK12/p38gamma. Phosphorylation on Ser-398 by CDK5 induced by neurotoxicity inhibits MEF2A transcriptional activation leading to apoptosis of cortical neurons. Phosphorylation on Thr-302, Thr-309 and Ser-345 can be induced by EGF. Sumoylation on Lys-393 is enhanced by PIAS1 and represses transcriptional activity. Phosphorylation on Ser-398 is required for sumoylation. Has no effect on nuclear location nor on DNA binding. Sumoylated with SUMO1 and, to a lesser extent with SUMO2 and SUMO3. PIASx facilitates sumoylation in postsynaptic dendrites in the cerebellar cortex and promotes their morphogenesis. Post-translationally, acetylation on Lys-393 activates transcriptional activity. Acetylated by p300 on several sites in diffentiating myocytes. Acetylation on Lys-4 increases DNA binding and transactivation. Hyperacetylation by p300 leads to enhanced cardiac myocyte growth and heart failure. In terms of processing, proteolytically cleaved in cerebellar granule neurons on several sites by caspase 3 and caspase 7 following neurotoxicity. Preferentially cleaves the CDK5-mediated hyperphosphorylated form which leads to neuron apoptosis and transcriptional inactivation.

It localises to the nucleus. Transcriptional activator which binds specifically to the MEF2 element, 5'-YTA[AT](4)TAR-3', found in numerous muscle-specific genes. Also involved in the activation of numerous growth factor- and stress-induced genes. Mediates cellular functions not only in skeletal and cardiac muscle development, but also in neuronal differentiation and survival. Plays diverse roles in the control of cell growth, survival and apoptosis via p38 MAPK signaling in muscle-specific and/or growth factor-related transcription. In cerebellar granule neurons, phosphorylated and sumoylated MEF2A represses transcription of NUR77 promoting synaptic differentiation. Associates with chromatin to the ZNF16 promoter. The chain is Myocyte-specific enhancer factor 2A (MEF2A) from Pongo abelii (Sumatran orangutan).